A 231-amino-acid polypeptide reads, in one-letter code: 2-C-methyl-D-erythritol 4-phosphate cytidylyltransferase (231 aa).

This sequence belongs to the IspD/TarI cytidylyltransferase family. IspD subfamily.

The enzyme catalyses 2-C-methyl-D-erythritol 4-phosphate + CTP + H(+) = 4-CDP-2-C-methyl-D-erythritol + diphosphate. The protein operates within isoprenoid biosynthesis; isopentenyl diphosphate biosynthesis via DXP pathway; isopentenyl diphosphate from 1-deoxy-D-xylulose 5-phosphate: step 2/6. Its function is as follows. Catalyzes the formation of 4-diphosphocytidyl-2-C-methyl-D-erythritol from CTP and 2-C-methyl-D-erythritol 4-phosphate (MEP). This is 2-C-methyl-D-erythritol 4-phosphate cytidylyltransferase from Bacillus licheniformis (strain ATCC 14580 / DSM 13 / JCM 2505 / CCUG 7422 / NBRC 12200 / NCIMB 9375 / NCTC 10341 / NRRL NRS-1264 / Gibson 46).